A 149-amino-acid polypeptide reads, in one-letter code: 3-dehydroquinate dehydratase (149 aa).

Catalysis depends on Y26, which acts as the Proton acceptor. Residues N77, H83, and D90 each coordinate substrate. The Proton donor role is filled by H103. Substrate contacts are provided by residues 104-105 (LS) and R114.

It belongs to the type-II 3-dehydroquinase family. Homododecamer.

It carries out the reaction 3-dehydroquinate = 3-dehydroshikimate + H2O. It participates in metabolic intermediate biosynthesis; chorismate biosynthesis; chorismate from D-erythrose 4-phosphate and phosphoenolpyruvate: step 3/7. In terms of biological role, catalyzes a trans-dehydration via an enolate intermediate. In Aliivibrio fischeri (strain MJ11) (Vibrio fischeri), this protein is 3-dehydroquinate dehydratase.